A 979-amino-acid polypeptide reads, in one-letter code: Ankycorbin (979 aa).

Position 1 is an N-acetylmethionine (M1). A Phosphoserine modification is found at S11. ANK repeat units follow at residues 18 to 51 (KNDD…KHDS), 52 to 81 (EGKT…DVTA), 85 to 114 (SGHS…PAEN), 118 to 147 (SGKT…PINL), 151 to 180 (DGNI…DVNS), 184 to 213 (NGRT…DLSL), and 217 to 247 (LGHN…DADL). Basic and acidic residues predominate over residues 247–259 (LKTPTKPKQHDQV). Residues 247-299 (LKTPTKPKQHDQVSKISSERSGTPKKRKAPPPPISPTQLSDVSSPRSITSTPL) form a disordered region. T249 carries the post-translational modification Phosphothreonine. Residues 270-276 (PKKRKAP) carry the Nuclear localization signal motif. S281, S286, and S293 each carry phosphoserine. Polar residues predominate over residues 282 to 299 (PTQLSDVSSPRSITSTPL). Phosphothreonine is present on residues T295 and T297. 8 positions are modified to phosphoserine: S300, S304, S318, S327, S329, S340, S341, and S358. Residues 349-374 (LVLLQAKVASLTLHNKELQDKLQAKS) are a coiled coil. Disordered regions lie at residues 392 to 429 (TQTD…TDND) and 446 to 467 (LESS…RTDT). Positions 430-943 (VIIRQLQDSL…CKKHHQEVIS (514 aa)) form a coiled coil. Over residues 446-457 (LESSEAEKKQLQ) the composition is skewed to basic and acidic residues. A compositionally biased stretch (polar residues) spans 458–467 (DELQSQRTDT). Phosphoserine is present on residues S513, S516, S667, S694, and S914.

As to quaternary structure, interacts with PALLD. Associates with actin. However, does not bind F-actin directly. In terms of tissue distribution, highly expressed in testis, where it localizes to seminiferous tubules (at protein level). Expressed in ganglion cell layer and in Muller cell fibers of the retina (at protein level). In small intestine highly expressed at the apical and lateral borders of absorptive epithelia (at protein level). In liver highly expressed along the bile canaliculi (at protein level).

It localises to the cytoplasm. The protein resides in the cytoskeleton. The protein localises to the stress fiber. It is found in the cell cortex. Its subcellular location is the cell junction. It localises to the nucleus. Plays a role in actin regulation at the ectoplasmic specialization, a type of cell junction specific to testis. Important for establishment of sperm polarity and normal spermatid adhesion. May also promote integrity of Sertoli cell tight junctions at the blood-testis barrier. This is Ankycorbin (Rai14) from Mus musculus (Mouse).